Here is a 181-residue protein sequence, read N- to C-terminus: Large ribosomal subunit protein uL5 (181 aa).

It belongs to the universal ribosomal protein uL5 family. In terms of assembly, part of the 50S ribosomal subunit; part of the 5S rRNA/L5/L18/L25 subcomplex. Contacts the 5S rRNA and the P site tRNA. Forms a bridge to the 30S subunit in the 70S ribosome.

Its function is as follows. This is one of the proteins that bind and probably mediate the attachment of the 5S RNA into the large ribosomal subunit, where it forms part of the central protuberance. In the 70S ribosome it contacts protein S13 of the 30S subunit (bridge B1b), connecting the 2 subunits; this bridge is implicated in subunit movement. Contacts the P site tRNA; the 5S rRNA and some of its associated proteins might help stabilize positioning of ribosome-bound tRNAs. The sequence is that of Large ribosomal subunit protein uL5 from Helicobacter pylori (strain P12).